Here is a 214-residue protein sequence, read N- to C-terminus: MTVLVKHLGVVDYVSTYEVMRAFTKERNSTTPDEIWILEHPPVFTLGLAGDAGNLHSPSNQIPLVQVDRGGEITYHGPGQIVVYLLLDLKRLGIFVKELVSRIEQALINTLADFGLVAERRSGAPGIYVSLQPGISPEWIGAKVAALGLKVSKSCSYHGLALNVATDLEAFGRIHPCGYEGLKTVDMQTLGIKDNIDTISQRLLEHLQKQLMPT.

In terms of domain architecture, BPL/LPL catalytic spans Ser29–Thr214. Residues Arg69–His76, Ala146–Gly148, and Gly159–Ala161 contribute to the substrate site. Cys177 functions as the Acyl-thioester intermediate in the catalytic mechanism.

It belongs to the LipB family.

It is found in the cytoplasm. It carries out the reaction octanoyl-[ACP] + L-lysyl-[protein] = N(6)-octanoyl-L-lysyl-[protein] + holo-[ACP] + H(+). It participates in protein modification; protein lipoylation via endogenous pathway; protein N(6)-(lipoyl)lysine from octanoyl-[acyl-carrier-protein]: step 1/2. Functionally, catalyzes the transfer of endogenously produced octanoic acid from octanoyl-acyl-carrier-protein onto the lipoyl domains of lipoate-dependent enzymes. Lipoyl-ACP can also act as a substrate although octanoyl-ACP is likely to be the physiological substrate. In Polynucleobacter asymbioticus (strain DSM 18221 / CIP 109841 / QLW-P1DMWA-1) (Polynucleobacter necessarius subsp. asymbioticus), this protein is Octanoyltransferase.